A 213-amino-acid polypeptide reads, in one-letter code: Large ribosomal subunit protein bL25 (213 aa).

It belongs to the bacterial ribosomal protein bL25 family. CTC subfamily. As to quaternary structure, part of the 50S ribosomal subunit; part of the 5S rRNA/L5/L18/L25 subcomplex. Contacts the 5S rRNA. Binds to the 5S rRNA independently of L5 and L18.

In terms of biological role, this is one of the proteins that binds to the 5S RNA in the ribosome where it forms part of the central protuberance. The sequence is that of Large ribosomal subunit protein bL25 from Mesorhizobium japonicum (strain LMG 29417 / CECT 9101 / MAFF 303099) (Mesorhizobium loti (strain MAFF 303099)).